The following is a 371-amino-acid chain: tRNA-specific 2-thiouridylase MnmA (371 aa).

Residues 8–15 and Met34 contribute to the ATP site; that span reads GMSGGVDS. The interval 94–96 is interaction with target base in tRNA; it reads NPD. Catalysis depends on Cys99, which acts as the Nucleophile. The cysteines at positions 99 and 195 are disulfide-linked. An ATP-binding site is contributed by Gly123. The segment at 145–147 is interaction with tRNA; the sequence is KDQ. Cys195 acts as the Cysteine persulfide intermediate in catalysis. The interaction with tRNA stretch occupies residues 309–310; it reads RY.

It belongs to the MnmA/TRMU family.

It localises to the cytoplasm. It catalyses the reaction S-sulfanyl-L-cysteinyl-[protein] + uridine(34) in tRNA + AH2 + ATP = 2-thiouridine(34) in tRNA + L-cysteinyl-[protein] + A + AMP + diphosphate + H(+). In terms of biological role, catalyzes the 2-thiolation of uridine at the wobble position (U34) of tRNA, leading to the formation of s(2)U34. The protein is tRNA-specific 2-thiouridylase MnmA of Methylococcus capsulatus (strain ATCC 33009 / NCIMB 11132 / Bath).